Consider the following 1012-residue polypeptide: Structural polyprotein (1012 aa).

Asp-30 provides a ligand contact to a divalent metal cation. Residues 513-755 (ADKGYEVVAN…AGRQYHLAMA (243 aa)) form the Peptidase S50 domain. Ser-652 (nucleophile) is an active-site residue. The active site involves Lys-692. The segment at 970-1012 (MEMKHRNPRRALPKPKPKPNAPTQRPPGRLGRWIRTVSDEDLE) is disordered. The span at 975-986 (RNPRRALPKPKP) shows a compositional bias: basic residues. The tract at residues 1003–1012 (IRTVSDEDLE) is interaction with VP1 protein.

Homotrimer. A central divalent metal stabilizes the VP2 trimer. Interacts with host ITGA4/ITGB1. In terms of assembly, homodimer. Interacts (via C-terminus) with VP1 in the cytoplasm. Interacts with VP2. In terms of processing, specific enzymatic cleavages yield mature proteins. The capsid assembly seems to be regulated by polyprotein processing. The protease VP4 cleaves itself off the polyprotein, thus releasing pre-VP2 and VP3 within the infected cell. During capsid assembly, the C-terminus of pre-VP2 is further processed by VP4, giving rise to VP2, the external capsid protein and three small peptides that all stay closely associated with the capsid.

It localises to the virion. It is found in the host cytoplasm. Its function is as follows. Capsid protein VP2 self assembles to form an icosahedral capsid with a T=13 symmetry, about 70 nm in diameter, and consisting of 260 VP2 trimers. The capsid encapsulates the genomic dsRNA. VP2 is also involved in attachment and entry into the host cell by interacting with host ITGA4/ITGB1. The precursor of VP2 plays an important role in capsid assembly. First, pre-VP2 and VP2 oligomers assemble to form a procapsid. Then, the pre-VP2 intermediates may be processed into VP2 proteins by proteolytic cleavage mediated by VP4 to obtain the mature virion. The final capsid is composed of pentamers and hexamers but VP2 has a natural tendency to assemble into all-pentameric structures. Therefore pre-VP2 may be required to allow formation of the hexameric structures. In terms of biological role, protease VP4 is a serine protease that cleaves the polyprotein into its final products. Pre-VP2 is first partially cleaved, and may be completely processed by VP4 upon capsid maturation. Functionally, capsid protein VP3 plays a key role in virion assembly by providing a scaffold for the capsid made of VP2. May self-assemble to form a T=4-like icosahedral inner-capsid composed of at least 180 trimers. Plays a role in genomic RNA packaging by recruiting VP1 into the capsid and interacting with the dsRNA genome segments to form a ribonucleoprotein complex. Additionally, the interaction of the VP3 C-terminal tail with VP1 removes the inherent structural blockade of the polymerase active site. Thus, VP3 can also function as a transcriptional activator. Its function is as follows. Structural peptide 1 is a small peptide derived from pre-VP2 C-terminus. It destabilizes and perforates cell membranes, suggesting a role during entry. Structural peptide 2 is a small peptide derived from pVP2 C-terminus. It is not essential for the virus viability, but viral growth is affected when missing. In terms of biological role, structural peptide 3 is a small peptide derived from pVP2 C-terminus. It is not essential for the virus viability, but viral growth is affected when missing. Functionally, structural peptide 4 is a small peptide derived from pVP2 C-terminus. It is essential for the virus viability. This Avian infectious bursal disease virus (strain Chicken/Cuba/Soroa/1998) (IBDV) protein is Structural polyprotein.